The following is a 311-amino-acid chain: Mycothiol acetyltransferase (311 aa).

Glutamate 35 provides a ligand contact to 1D-myo-inositol 2-(L-cysteinylamino)-2-deoxy-alpha-D-glucopyranoside. 79 to 81 contacts acetyl-CoA; sequence LVV. The N-acetyltransferase domain maps to 155-311; sequence VRTYVGTVDD…TAYALARIDD (157 aa). 1D-myo-inositol 2-(L-cysteinylamino)-2-deoxy-alpha-D-glucopyranoside-binding residues include glutamate 180, lysine 225, and glutamate 235. Residues 239–241 and 246–252 each bind acetyl-CoA; these read LGV and QGRGLGQ. 1D-myo-inositol 2-(L-cysteinylamino)-2-deoxy-alpha-D-glucopyranoside is bound at residue tyrosine 278. 283–288 is an acetyl-CoA binding site; sequence NVAAAR.

This sequence belongs to the acetyltransferase family. MshD subfamily. As to quaternary structure, monomer.

It catalyses the reaction 1D-myo-inositol 2-(L-cysteinylamino)-2-deoxy-alpha-D-glucopyranoside + acetyl-CoA = mycothiol + CoA + H(+). Functionally, catalyzes the transfer of acetyl from acetyl-CoA to desacetylmycothiol (Cys-GlcN-Ins) to form mycothiol. The sequence is that of Mycothiol acetyltransferase from Mycobacterium leprae (strain Br4923).